The sequence spans 77 residues: MSHLDEVIARVDAAIEESVIAHMNELLIALSDDAELSREDRYTQQQRLRTAIAHHGRKHKEDMEARHEQLTKGGTIL.

The tract at residues 54-77 is disordered; it reads HHGRKHKEDMEARHEQLTKGGTIL. Residues 59 to 70 are compositionally biased toward basic and acidic residues; the sequence is HKEDMEARHEQL.

This is an uncharacterized protein from Escherichia coli O157:H7.